The following is a 185-amino-acid chain: GTP cyclohydrolase 1 (185 aa).

Zn(2+) is bound by residues cysteine 75, histidine 78, and cysteine 146.

This sequence belongs to the GTP cyclohydrolase I family. Homomer.

It carries out the reaction GTP + H2O = 7,8-dihydroneopterin 3'-triphosphate + formate + H(+). Its pathway is cofactor biosynthesis; 7,8-dihydroneopterin triphosphate biosynthesis; 7,8-dihydroneopterin triphosphate from GTP: step 1/1. This Clostridium kluyveri (strain NBRC 12016) protein is GTP cyclohydrolase 1.